Consider the following 296-residue polypeptide: uncharacterized protein (296 aa).

10 consecutive transmembrane segments (helical) span residues 8–28 (LFVL…ALAP), 34–54 (LAFG…AVWI), 63–83 (WAWP…PLFF), 89–109 (TGIA…AGTL), 121–141 (SWWI…SDSS), 147–167 (VAGV…TLIS), 183–203 (VFMI…ISWI), 208–228 (GLGT…FLFA), 238–258 (AAVT…VFFI), and 261–281 (MLSP…LVIS). 2 EamA domains span residues 15-138 (FFWG…LLFS) and 158-282 (ASFA…VISA).

The protein belongs to the EamA transporter family.

The protein resides in the cell membrane. This is an uncharacterized protein from Bacillus subtilis (strain 168).